The sequence spans 397 residues: Acetyl-CoA acetyltransferase (397 aa).

Catalysis depends on Cys-95, which acts as the Acyl-thioester intermediate. Positions 187 and 230 each coordinate CoA. Tyr-187 provides a ligand contact to K(+). 3 residues coordinate K(+): Ala-246, Gly-247, and Ala-249. A CoA-binding site is contributed by Ser-250. A K(+)-binding site is contributed by Val-347. Catalysis depends on proton acceptor residues His-351 and Cys-379.

It belongs to the thiolase-like superfamily. Thiolase family.

Its subcellular location is the peroxisome. It carries out the reaction 2 acetyl-CoA = acetoacetyl-CoA + CoA. Its function is as follows. Essential for n-decane utilization. In Yarrowia lipolytica (strain CLIB 122 / E 150) (Yeast), this protein is Acetyl-CoA acetyltransferase (PAT1).